Reading from the N-terminus, the 543-residue chain is Serine/threonine-protein kinase PkaA (543 aa).

The 269-residue stretch at 8-276 (YLLEEPLGRG…ENLARGLRVV (269 aa)) folds into the Protein kinase domain. ATP is bound by residues 14–22 (LGRGATGTV) and K48. D142 acts as the Proton acceptor in catalysis. The segment at 303–480 (PAPAQVPGAP…RQRSANPMRI (178 aa)) is disordered. The span at 352-361 (VMPPVPPGQP) shows a compositional bias: pro residues. Low complexity-rich tracts occupy residues 407–420 (RQVSRPPQQPRQAP) and 428–451 (PGYGYPQQQQPQRYATPQPQQPQR). Over residues 452 to 461 (YAPPPAPEPQ) the composition is skewed to pro residues.

Belongs to the protein kinase superfamily. Ser/Thr protein kinase family. Autophosphorylated mainly at Thr and slightly at Ser.

The enzyme catalyses L-seryl-[protein] + ATP = O-phospho-L-seryl-[protein] + ADP + H(+). It catalyses the reaction L-threonyl-[protein] + ATP = O-phospho-L-threonyl-[protein] + ADP + H(+). The sequence is that of Serine/threonine-protein kinase PkaA (pkaA) from Streptomyces coelicolor (strain ATCC BAA-471 / A3(2) / M145).